The chain runs to 187 residues: Elongation factor P (187 aa).

The protein belongs to the elongation factor P family.

Its subcellular location is the cytoplasm. It participates in protein biosynthesis; polypeptide chain elongation. In terms of biological role, involved in peptide bond synthesis. Stimulates efficient translation and peptide-bond synthesis on native or reconstituted 70S ribosomes in vitro. Probably functions indirectly by altering the affinity of the ribosome for aminoacyl-tRNA, thus increasing their reactivity as acceptors for peptidyl transferase. The chain is Elongation factor P from Corynebacterium jeikeium (strain K411).